A 176-amino-acid polypeptide reads, in one-letter code: Transcription factor E (176 aa).

Residues 8–90 (EDPVIQKYLH…LWTFQYEKIP (83 aa)) enclose the HTH TFE/IIEalpha-type domain.

Belongs to the TFE family. As to quaternary structure, monomer. Interaction with RNA polymerase subunits RpoF and RpoE is necessary for Tfe stimulatory transcription activity. Able to interact with Tbp and RNA polymerase in the absence of DNA promoter. Interacts both with the preinitiation and elongation complexes.

Its function is as follows. Transcription factor that plays a role in the activation of archaeal genes transcribed by RNA polymerase. Facilitates transcription initiation by enhancing TATA-box recognition by TATA-box-binding protein (Tbp), and transcription factor B (Tfb) and RNA polymerase recruitment. Not absolutely required for transcription in vitro, but particularly important in cases where Tbp or Tfb function is not optimal. It dynamically alters the nucleic acid-binding properties of RNA polymerases by stabilizing the initiation complex and destabilizing elongation complexes. Seems to translocate with the RNA polymerase following initiation and acts by binding to the non template strand of the transcription bubble in elongation complexes. The chain is Transcription factor E from Haloarcula marismortui (strain ATCC 43049 / DSM 3752 / JCM 8966 / VKM B-1809) (Halobacterium marismortui).